The primary structure comprises 118 residues: Large ribosomal subunit protein bL19 (118 aa).

Belongs to the bacterial ribosomal protein bL19 family.

This protein is located at the 30S-50S ribosomal subunit interface and may play a role in the structure and function of the aminoacyl-tRNA binding site. The polypeptide is Large ribosomal subunit protein bL19 (Marinobacter nauticus (strain ATCC 700491 / DSM 11845 / VT8) (Marinobacter aquaeolei)).